Reading from the N-terminus, the 100-residue chain is Aspartyl/glutamyl-tRNA(Asn/Gln) amidotransferase subunit C (100 aa).

It belongs to the GatC family. Heterotrimer of A, B and C subunits.

It catalyses the reaction L-glutamyl-tRNA(Gln) + L-glutamine + ATP + H2O = L-glutaminyl-tRNA(Gln) + L-glutamate + ADP + phosphate + H(+). It carries out the reaction L-aspartyl-tRNA(Asn) + L-glutamine + ATP + H2O = L-asparaginyl-tRNA(Asn) + L-glutamate + ADP + phosphate + 2 H(+). Functionally, allows the formation of correctly charged Asn-tRNA(Asn) or Gln-tRNA(Gln) through the transamidation of misacylated Asp-tRNA(Asn) or Glu-tRNA(Gln) in organisms which lack either or both of asparaginyl-tRNA or glutaminyl-tRNA synthetases. The reaction takes place in the presence of glutamine and ATP through an activated phospho-Asp-tRNA(Asn) or phospho-Glu-tRNA(Gln). The chain is Aspartyl/glutamyl-tRNA(Asn/Gln) amidotransferase subunit C from Corynebacterium aurimucosum (strain ATCC 700975 / DSM 44827 / CIP 107346 / CN-1) (Corynebacterium nigricans).